We begin with the raw amino-acid sequence, 685 residues long: ATP-dependent zinc metalloprotease FTSH 8, chloroplastic (685 aa).

The N-terminal 37 residues, 1–37 (MAASSACLLGNGLSVYTTKQRFQKLGLDRTSKVTVVK), are a transit peptide targeting the chloroplast. A thylakoid-targeting transit peptide spans 38-73 (ASLDEKKHEGRRGFFKLLLGNAAAGVGLLASGNANA). Residues 38 to 161 (ASLDEKKHEG…HNAQEDQGSP (124 aa)) are Lumenal, thylakoid-facing. The helical transmembrane segment at 162–182 (ILNLIGNLAFPVILIGGLFLL) threads the bilayer. Over 183 to 685 (SRRSSGGMGG…STSTPTPASV (503 aa)) the chain is Stromal. ATP is bound at residue 260–267 (GPPGTGKT). H481 contributes to the Zn(2+) binding site. E482 is an active-site residue. Positions 485 and 559 each coordinate Zn(2+).

It in the N-terminal section; belongs to the AAA ATPase family. This sequence in the C-terminal section; belongs to the peptidase M41 family. Heterohexamers with FTSH1, FTSH2 and FTSH5. May also form homooligomers. Zn(2+) is required as a cofactor. As to expression, expressed in cotyledons, cauline and rosette leaves, stems, sepals, flovers and siliques. Very low in roots.

Its subcellular location is the plastid. It localises to the chloroplast thylakoid membrane. In terms of biological role, part of a complex that function as an ATP-dependent zinc metallopeptidase. Involved in the thylakoid formation and in the removal of damaged D1 in the photosystem II, preventing cell death under high-intensity light conditions. This is ATP-dependent zinc metalloprotease FTSH 8, chloroplastic (FTSH8) from Arabidopsis thaliana (Mouse-ear cress).